Reading from the N-terminus, the 253-residue chain is DNA repair protein RecO (253 aa).

Belongs to the RecO family.

Involved in DNA repair and RecF pathway recombination. This is DNA repair protein RecO from Dehalococcoides mccartyi (strain CBDB1).